Here is a 445-residue protein sequence, read N- to C-terminus: Phosphoglucosamine mutase (445 aa).

Ser-102 serves as the catalytic Phosphoserine intermediate. The Mg(2+) site is built by Ser-102, Asp-241, Asp-243, and Asp-245. Ser-102 carries the post-translational modification Phosphoserine.

It belongs to the phosphohexose mutase family. Mg(2+) is required as a cofactor. Activated by phosphorylation.

The catalysed reaction is alpha-D-glucosamine 1-phosphate = D-glucosamine 6-phosphate. Functionally, catalyzes the conversion of glucosamine-6-phosphate to glucosamine-1-phosphate. In Sodalis glossinidius (strain morsitans), this protein is Phosphoglucosamine mutase.